Consider the following 247-residue polypeptide: 1-(5-phosphoribosyl)-5-[(5-phosphoribosylamino)methylideneamino] imidazole-4-carboxamide isomerase (247 aa).

Asp-8 (proton acceptor) is an active-site residue. Residue Asp-129 is the Proton donor of the active site.

This sequence belongs to the HisA/HisF family.

It is found in the cytoplasm. It catalyses the reaction 1-(5-phospho-beta-D-ribosyl)-5-[(5-phospho-beta-D-ribosylamino)methylideneamino]imidazole-4-carboxamide = 5-[(5-phospho-1-deoxy-D-ribulos-1-ylimino)methylamino]-1-(5-phospho-beta-D-ribosyl)imidazole-4-carboxamide. It functions in the pathway amino-acid biosynthesis; L-histidine biosynthesis; L-histidine from 5-phospho-alpha-D-ribose 1-diphosphate: step 4/9. This Bradyrhizobium sp. (strain BTAi1 / ATCC BAA-1182) protein is 1-(5-phosphoribosyl)-5-[(5-phosphoribosylamino)methylideneamino] imidazole-4-carboxamide isomerase.